A 476-amino-acid chain; its full sequence is Sulfate adenylyltransferase subunit 1 (476 aa).

The region spanning 24 to 239 (KSLLRFLTCG…LLETVDVDHE (216 aa)) is the tr-type G domain. Positions 33-40 (GSVDDGKS) are G1. 33 to 40 (GSVDDGKS) is a GTP binding site. Positions 91–95 (GITID) are G2. Residues 112–115 (DTPG) form a G3 region. GTP-binding positions include 112 to 116 (DTPGH) and 167 to 170 (NKMD). The segment at 167–170 (NKMD) is G4. A G5 region spans residues 205–207 (SAL).

Belongs to the TRAFAC class translation factor GTPase superfamily. Classic translation factor GTPase family. CysN/NodQ subfamily. Heterodimer composed of CysD, the smaller subunit, and CysN.

It catalyses the reaction sulfate + ATP + H(+) = adenosine 5'-phosphosulfate + diphosphate. Its pathway is sulfur metabolism; hydrogen sulfide biosynthesis; sulfite from sulfate: step 1/3. With CysD forms the ATP sulfurylase (ATPS) that catalyzes the adenylation of sulfate producing adenosine 5'-phosphosulfate (APS) and diphosphate, the first enzymatic step in sulfur assimilation pathway. APS synthesis involves the formation of a high-energy phosphoric-sulfuric acid anhydride bond driven by GTP hydrolysis by CysN coupled to ATP hydrolysis by CysD. In Vibrio campbellii (strain ATCC BAA-1116), this protein is Sulfate adenylyltransferase subunit 1.